Here is a 428-residue protein sequence, read N- to C-terminus: Magnesium transporter MRS2-C (428 aa).

Transmembrane regions (helical) follow at residues 364–384 and 400–420; these read LLLT…GVFG and WTLV…IWYF. The short motif at 384–386 is the Required for magnesium transport activity element; the sequence is GMN.

The protein belongs to the CorA metal ion transporter (MIT) (TC 1.A.35.5) family.

The protein resides in the membrane. Its function is as follows. Magnesium transporter that may mediate the influx of magnesium. The chain is Magnesium transporter MRS2-C from Oryza sativa subsp. indica (Rice).